Reading from the N-terminus, the 1416-residue chain is DNA-directed RNA polymerase subunit beta (1416 aa).

Residues 1388–1416 form a disordered region; that stretch reads AKAAREQAEGELGGPLGTPRGAAAEKNTA.

It belongs to the RNA polymerase beta chain family. The RNAP catalytic core consists of 2 alpha, 1 beta, 1 beta' and 1 omega subunit. When a sigma factor is associated with the core the holoenzyme is formed, which can initiate transcription.

It catalyses the reaction RNA(n) + a ribonucleoside 5'-triphosphate = RNA(n+1) + diphosphate. In terms of biological role, DNA-dependent RNA polymerase catalyzes the transcription of DNA into RNA using the four ribonucleoside triphosphates as substrates. This Anaeromyxobacter sp. (strain Fw109-5) protein is DNA-directed RNA polymerase subunit beta.